Reading from the N-terminus, the 314-residue chain is MPNLKFIRDRIQSVKNTKKITEAMRLVAAAKVRRAQEQVIATRPFADALAQVLYNLQNRLQFGEVSLPLLTQREIKTVAVLVVTGDRGLCGGYNANVIKRTEQRIKELKSQGINYKLVLIGRKAVQYFERRNAPIQTKYTELSQIPSASEASTISDELLSLFLSETVDRVELIYTRFLSLISSKPVVQTLLPLTTKGLDTPDDEIFRLVTKGGKFQVEREKVSASVSSFPQDMIFEQDPVQILDSLLPLYLNNQLLRALQESAASELAARMTAMSSASDNAGELIKTLSLSYNKARQAAITQEILEVVAGANAL.

It belongs to the ATPase gamma chain family. F-type ATPases have 2 components, CF(1) - the catalytic core - and CF(0) - the membrane proton channel. CF(1) has five subunits: alpha(3), beta(3), gamma(1), delta(1), epsilon(1). CF(0) has three main subunits: a, b and c.

It is found in the cellular thylakoid membrane. Its function is as follows. Produces ATP from ADP in the presence of a proton gradient across the membrane. The gamma chain is believed to be important in regulating ATPase activity and the flow of protons through the CF(0) complex. The polypeptide is ATP synthase gamma chain (Gloeothece citriformis (strain PCC 7424) (Cyanothece sp. (strain PCC 7424))).